Consider the following 294-residue polypeptide: Probable enoyl-CoA hydratase 2 (294 aa).

Residues 84–85 (HG), K113, 190–195 (DLNPLH), G213, and F243 each bind (3R)-3-hydroxydecanoyl-CoA. The 105-residue stretch at 165 to 269 (DRAPDAISKQ…INPTTILFQS (105 aa)) folds into the MaoC-like domain. The Microbody targeting signal motif lies at 292-294 (GSL).

Belongs to the short-chain dehydrogenases/reductases (SDR) family.

Its subcellular location is the peroxisome. The catalysed reaction is a (3R)-3-hydroxyacyl-CoA = a (2E)-enoyl-CoA + H2O. The sequence is that of Probable enoyl-CoA hydratase 2 (mfeB) from Dictyostelium discoideum (Social amoeba).